The chain runs to 197 residues: Isochorismatase domain-containing protein 2 (197 aa).

It belongs to the isochorismatase family.

The polypeptide is Isochorismatase domain-containing protein 2 (isoc2) (Danio rerio (Zebrafish)).